The following is a 214-amino-acid chain: Mediator of RNA polymerase II transcription subunit 29 (214 aa).

Positions 1 to 78 (MMNQMGMHMQ…QQQSQQTEKV (78 aa)) are disordered. The segment covering 15-34 (VPGGPGGPVGMAGGPVGGVG) has biased composition (gly residues). The span at 44-74 (QMQQQQQVAAQQQQQQQQQQQAQAHQQQSQQ) shows a compositional bias: low complexity.

The protein belongs to the Mediator complex subunit 29 family. Component of the Mediator complex.

It is found in the nucleus. In terms of biological role, component of the Mediator complex, a coactivator involved in the regulated transcription of nearly all RNA polymerase II-dependent genes. Mediator functions as a bridge to convey information from gene-specific regulatory proteins to the basal RNA polymerase II transcription machinery. Mediator is recruited to promoters by direct interactions with regulatory proteins and serves as a scaffold for the assembly of a functional preinitiation complex with RNA polymerase II and the general transcription factors. This is Mediator of RNA polymerase II transcription subunit 29 (ix) from Aedes aegypti (Yellowfever mosquito).